A 345-amino-acid polypeptide reads, in one-letter code: Heat-inducible transcription repressor HrcA (345 aa).

This sequence belongs to the HrcA family.

Functionally, negative regulator of class I heat shock genes (grpE-dnaK-dnaJ and groELS operons). Prevents heat-shock induction of these operons. In Zymomonas mobilis subsp. mobilis (strain ATCC 31821 / ZM4 / CP4), this protein is Heat-inducible transcription repressor HrcA.